Here is a 209-residue protein sequence, read N- to C-terminus: MEPLNPYPVKFSSPKAKVSVVFLSMLLCTGILCVLQLGFLRAKGGDFYSYEVTDAKGRAVALSKYRGKASLVVNVASGCPHAEANYRSLQELHREFGPSHFTVLAFPCNQFGESEPGTNQEIGALAKRNYGVTFPMFSKIKILGSEAEPAYRFLVDSTKKEPRWNFWKYLVDPQGQVVKYWRPDETAESIRPEVASLVRQIIMKKKEEL.

Residues 18 to 40 (VSVVFLSMLLCTGILCVLQLGFL) traverse the membrane as a helical segment. Residue cysteine 79 is part of the active site.

It belongs to the glutathione peroxidase family.

It localises to the membrane. The enzyme catalyses 2 glutathione + H2O2 = glutathione disulfide + 2 H2O. The protein is Probable glutathione peroxidase 8-A (gpx8-a) of Xenopus laevis (African clawed frog).